Consider the following 532-residue polypeptide: Probable G-protein coupled receptor Mth-like 11 (532 aa).

Positions 1 to 20 (MGMFRVEYLLLGILVIGVRS) are cleaved as a signal peptide. At 21–229 (RDIPNCDFFD…VRKSRLSNAS (209 aa)) the chain is on the extracellular side. Disulfide bonds link Cys-26–Cys-80, Cys-82–Cys-87, Cys-91–Cys-184, Cys-92–Cys-103, and Cys-145–Cys-204. Asn-42 carries N-linked (GlcNAc...) asparagine glycosylation. 5 N-linked (GlcNAc...) asparagine glycosylation sites follow: Asn-110, Asn-123, Asn-166, Asn-195, and Asn-227. A helical transmembrane segment spans residues 230–250 (IPVKFSSVFFMVITIAAYLWL). Residues 251–262 (PKFRSLHGKCCN) lie on the Cytoplasmic side of the membrane. Residues 263 to 283 (LYFICLAITFLLNVISLFGIF) traverse the membrane as a helical segment. Over 284-290 (ELKTPIC) the chain is Extracellular. The chain crosses the membrane as a helical span at residues 291-311 (YLTGYAGYFTVMATFLWLSVI). The Cytoplasmic segment spans residues 312-339 (SFDVWRRFAMRKFQVFYKNKRSSFFNYN). Residues 340–360 (IIVWSSAGLLTCIIFLVDQFV) form a helical membrane-spanning segment. Residues 361-386 (ETNLDNPYNPAVGVFSCWIFTNGWSA) lie on the Extracellular side of the membrane. A helical membrane pass occupies residues 387 to 407 (TFYFYAPLAILIILNCASFFL). Over 408-439 (TTRYIYVENKQNQKVLNNSEPQKLSRNHANYR) the chain is Cytoplasmic. The helical transmembrane segment at 440–460 (IYFRLFIIMGGSWFLEIIAFI) threads the bilayer. The Extracellular segment spans residues 461 to 469 (CEMENMWKP). A helical transmembrane segment spans residues 470 to 490 (LIILNDYINCSQGIIIFVATF). The Cytoplasmic portion of the chain corresponds to 491–532 (CNHEMFRLIRKRIQNRNITSLELTNTSRPVESEKMADVELGK).

The protein belongs to the G-protein coupled receptor 2 family. Mth subfamily.

Its subcellular location is the cell membrane. The protein is Probable G-protein coupled receptor Mth-like 11 (mthl11) of Drosophila melanogaster (Fruit fly).